Consider the following 516-residue polypeptide: Golgin-84 (516 aa).

The Cytoplasmic segment spans residues 1–492 (MSSWITGLAD…TFLRRYPMMR (492 aa)). The tract at residues 28–80 (QTENATGSADPMRRSMTSSTQSLSTSLKSTLSPVRRSGANSSSSVKSDGGVSV) is disordered. Residues 42 to 80 (SMTSSTQSLSTSLKSTLSPVRRSGANSSSSVKSDGGVSV) show a composition bias toward low complexity. Residues serine 64 and serine 74 each carry the phosphoserine modification. The stretch at 108 to 423 (TNELAAFKIA…KAQTQLQQNM (316 aa)) forms a coiled coil. Residues 493–513 (VSVIVYVALLHLWVMFVLLST) form a helical; Anchor for type IV membrane protein membrane-spanning segment. Topologically, residues 514–516 (TPN) are lumenal.

It localises to the golgi apparatus membrane. Functionally, may be involved in maintaining Golgi structure and in intra-Golgi transport. This is Golgin-84 (Golgin84) from Drosophila melanogaster (Fruit fly).